The following is a 535-amino-acid chain: GMP synthase [glutamine-hydrolyzing] (535 aa).

The Glutamine amidotransferase type-1 domain occupies 20–210 (PVLVVDFGAQ…LHRCAALPND (191 aa)). Cys97 serves as the catalytic Nucleophile. Catalysis depends on residues His184 and Glu186. The GMPS ATP-PPase domain occupies 211-409 (WDASSIIEDQ…LGLPDEIVWR (199 aa)). 238–244 (SGGVDSA) provides a ligand contact to ATP.

As to quaternary structure, homodimer.

It catalyses the reaction XMP + L-glutamine + ATP + H2O = GMP + L-glutamate + AMP + diphosphate + 2 H(+). It functions in the pathway purine metabolism; GMP biosynthesis; GMP from XMP (L-Gln route): step 1/1. Its function is as follows. Catalyzes the synthesis of GMP from XMP. The protein is GMP synthase [glutamine-hydrolyzing] of Bifidobacterium longum (strain NCC 2705).